A 313-amino-acid polypeptide reads, in one-letter code: MDSEDNSAPRGERGIEQFSHVSVLSQEAIDFLAIRRGGTYLDATLGLGGHSYEIAKRLGAQGHLIALDKDTNALEMARRRLEQVPDDLKEDWPQITLLHASFAEMKQHIASKSLDGVLADLGISSMQLQDAGRGFSFQAEGPLDMRMNPHGDLTAEQVVNHTSERELADVIYEFGEERRSRRIARAICRARPIRTTAHLAQVISVAARPMNQAERRIHPATKTFQALRIFVNHELDDLKELLASVPSRLVPRGRLVVISFHSLEDRIVKDSLRDGASAGKYELLTKKPVTATEEEIDRNPRSRSAKLRAAARK.

S-adenosyl-L-methionine is bound by residues 48-50 (GGH), aspartate 68, phenylalanine 102, aspartate 120, and glutamine 127. Positions 290–313 (TATEEEIDRNPRSRSAKLRAAARK) are disordered. Over residues 301–313 (RSRSAKLRAAARK) the composition is skewed to basic residues.

Belongs to the methyltransferase superfamily. RsmH family.

The protein localises to the cytoplasm. It carries out the reaction cytidine(1402) in 16S rRNA + S-adenosyl-L-methionine = N(4)-methylcytidine(1402) in 16S rRNA + S-adenosyl-L-homocysteine + H(+). Specifically methylates the N4 position of cytidine in position 1402 (C1402) of 16S rRNA. This Koribacter versatilis (strain Ellin345) protein is Ribosomal RNA small subunit methyltransferase H.